A 193-amino-acid chain; its full sequence is Cyanate hydratase (193 aa).

Active-site residues include Arg121, Glu124, and Ser147.

The protein belongs to the cyanase family.

The catalysed reaction is cyanate + hydrogencarbonate + 3 H(+) = NH4(+) + 2 CO2. Functionally, catalyzes the reaction of cyanate with bicarbonate to produce ammonia and carbon dioxide. The sequence is that of Cyanate hydratase from Phaeodactylum tricornutum (strain CCAP 1055/1).